Reading from the N-terminus, the 224-residue chain is Germin-like protein 8-11 (224 aa).

A signal peptide spans 1-22 (MASSSFLLLATLLAMASWQGMA). Cysteines 32 and 47 form a disulfide. Residues 62–212 (AMLDTPRKTN…AFQVEKGTID (151 aa)) enclose the Cupin type-1 domain. N-linked (GlcNAc...) asparagine glycosylation is present at Asn-76. Residues His-109, His-111, Glu-116, and His-157 each coordinate Mn(2+).

It belongs to the germin family. Oligomer (believed to be a pentamer but probably hexamer).

The protein localises to the secreted. It localises to the extracellular space. Its subcellular location is the apoplast. In terms of biological role, plays a role in broad-spectrum disease resistance. Probably has no oxalate oxidase activity even if the active site is conserved. This is Germin-like protein 8-11 from Oryza sativa subsp. japonica (Rice).